Here is a 192-residue protein sequence, read N- to C-terminus: Ion-translocating oxidoreductase complex subunit B (192 aa).

The hydrophobic stretch occupies residues Met1–Ser26. A 4Fe-4S domain is found at Glu32–Val91. [4Fe-4S] cluster is bound by residues Cys49, Cys52, Cys57, Cys74, Cys117, Cys120, Cys123, Cys127, Cys147, Cys150, Cys153, and Cys157. 4Fe-4S ferredoxin-type domains are found at residues Met108–Arg137 and Ala138–Val167.

This sequence belongs to the 4Fe4S bacterial-type ferredoxin family. RnfB subfamily. The complex is composed of six subunits: RsxA, RsxB, RsxC, RsxD, RsxE and RsxG. Requires [4Fe-4S] cluster as cofactor.

Its subcellular location is the cell inner membrane. Its function is as follows. Part of a membrane-bound complex that couples electron transfer with translocation of ions across the membrane. Required to maintain the reduced state of SoxR. The polypeptide is Ion-translocating oxidoreductase complex subunit B (Escherichia coli O127:H6 (strain E2348/69 / EPEC)).